The primary structure comprises 745 residues: Cytoskeleton-associated protein 2-like (745 aa).

Disordered stretches follow at residues Lys-26–Val-305, Pro-319–Gln-362, Phe-422–Arg-483, and Glu-608–Ser-638. Composition is skewed to polar residues over residues Ser-67 to Lys-89 and Gly-101 to Pro-136. The KEN box signature appears at Lys-183–Asn-185. Residues Lys-192 to Ser-202 are compositionally biased toward basic and acidic residues. A Glycyl lysine isopeptide (Lys-Gly) (interchain with G-Cter in SUMO1); alternate cross-link involves residue Lys-195. Lys-195 is covalently cross-linked (Glycyl lysine isopeptide (Lys-Gly) (interchain with G-Cter in SUMO2); alternate). Polar residues-rich tracts occupy residues Lys-205–Lys-216, Leu-224–Ala-233, Phe-242–Val-253, and Asn-284–Thr-301. Positions His-427 to Ala-442 are enriched in polar residues. Positions Lys-459–Lys-475 are enriched in basic and acidic residues. A compositionally biased stretch (polar residues) spans Glu-608–Ala-624. The residue at position 745 (Ser-745) is a Phosphoserine.

The protein belongs to the CKAP2 family. In terms of processing, ubiquitinated by the anaphase promoting complex/cyclosome (APC/C). Highly expressed in regions of active neurogenesis and neural stem/progenitor cells (NSPCs), both embryonic and adult, not detected in lung, liver, kidney, heart, and skeletal muscle.

It localises to the cytoplasm. The protein resides in the cytoskeleton. Its subcellular location is the spindle pole. Functionally, microtubule-associated protein required for mitotic spindle formation and cell-cycle progression in neural progenitor cells. This chain is Cytoskeleton-associated protein 2-like (Ckap2l), found in Mus musculus (Mouse).